The following is a 687-amino-acid chain: Complement C1s subcomponent (687 aa).

A signal peptide spans 1–15 (MWCIVLLSLLAWVDA). Residues 16–130 (EPTMYGEILS…TGFAAYYVAV (115 aa)) enclose the CUB 1 domain. Ca(2+) is bound by residues E60, D68, D113, D131, V132, and E134. A disulfide bond links C65 and C83. In terms of domain architecture, EGF-like; calcium-binding spans 131–172 (DVNECTDFADSPCSHFCNNYIGGYFCSCPPEYFLHEDKKNCG). 3 disulfide bridges follow: C135–C147, C143–C156, and C158–C171. The Ca(2+) site is built by N149, Y150, and G153. N149 carries the (3R)-3-hydroxyasparagine modification. N174 is a glycosylation site (N-linked (GlcNAc...) asparagine). 9 cysteine pairs are disulfide-bonded: C175–C202, C234–C251, C294–C341, C321–C354, C359–C403, C386–C421, C425–C548, C594–C617, and C626–C658. The region spanning 175 to 290 (CSGDVFTTLI…KGWKFRYHGD (116 aa)) is the CUB 2 domain. 2 Sushi domains span residues 292 to 356 (IPCP…RCQP) and 357 to 423 (VDCG…KCVP). N406 carries an N-linked (GlcNAc...) asparagine glycan. Residues 438-679 (IFGGIITKIE…YIDWIRETMQ (242 aa)) enclose the Peptidase S1 domain. Active-site charge relay system residues include H475 and D528. The Charge relay system role is filled by S630.

Belongs to the peptidase S1 family. As to quaternary structure, C1 is a calcium-dependent trimolecular complex of C1q, C1r and C1s in the molar ration of 1:2:2. Activated C1s is an disulfide-linked heterodimer of a heavy chain and a light chain. Post-translationally, the iron and 2-oxoglutarate dependent 3-hydroxylation of aspartate and asparagine is (R) stereospecific within EGF domains.

It carries out the reaction Cleavage of Arg-|-Ala bond in complement component C4 to form C4a and C4b, and Lys(or Arg)-|-Lys bond in complement component C2 to form C2a and C2b: the 'classical' pathway C3 convertase.. With respect to regulation, inhibited by SERPING1. Functionally, C1s B chain is a serine protease that combines with C1q and C1r to form C1, the first component of the classical pathway of the complement system. C1r activates C1s so that it can, in turn, activate C2 and C4. Also cleaves IGFBP5 and thereby inhibits the trophic effects of IGF1. This Sus scrofa (Pig) protein is Complement C1s subcomponent.